We begin with the raw amino-acid sequence, 652 residues long: Forkhead box protein O1-A (652 aa).

Disordered stretches follow at residues 1–57 (MADA…EPSS), 208–277 (SSWW…NSHS), and 359–406 (NLLS…QQTQ). The span at 41–57 (DSNTSSPAPSVKQEPSS) shows a compositional bias: polar residues. Positions 134–228 (WGNMSYADLI…KSGKSPRRRA (95 aa)) form a DNA-binding region, fork-head. The segment covering 238–249 (AKSRGRAAKKKL) has biased composition (basic residues). A compositionally biased stretch (low complexity) spans 362–397 (SPKNPSTGGPGSGSNQSSPSSLMQASPGYSPYSSPG).

It is found in the cytoplasm. It localises to the nucleus. Its function is as follows. Transcription factor that regulates metabolic homeostasis in response to oxidative stress. Binds to the consensus sequence 5'-TT[G/A]TTTTG-3' and the related Daf-16 family binding element (DBE) with consensus sequence 5'-TT[G/A]TTTAC-3'. Main regulator of redox balance and osteoblast numbers and controls bone mass. Orchestrates the endocrine function of the skeleton in regulating glucose metabolism. May be involved in regulating cellular homeostasis in the eye. May act as a positive regulator of apoptosis in cardiac smooth muscle cells as a result of its transcriptional activation of pro-apoptotic genes. The polypeptide is Forkhead box protein O1-A (foxo1a) (Danio rerio (Zebrafish)).